We begin with the raw amino-acid sequence, 231 residues long: Cytidylate kinase (231 aa).

16 to 24 is an ATP binding site; sequence GPAASGKST. Positions 176–205 are disordered; sequence PDLDSLEQEITKRDRDDAEREHAPLKKHPE. Over residues 184–205 the composition is skewed to basic and acidic residues; the sequence is EITKRDRDDAEREHAPLKKHPE.

This sequence belongs to the cytidylate kinase family. Type 1 subfamily.

The protein localises to the cytoplasm. The enzyme catalyses CMP + ATP = CDP + ADP. The catalysed reaction is dCMP + ATP = dCDP + ADP. The polypeptide is Cytidylate kinase (Pelodictyon phaeoclathratiforme (strain DSM 5477 / BU-1)).